We begin with the raw amino-acid sequence, 227 residues long: Orotidine 5'-phosphate decarboxylase (227 aa).

Substrate is bound by residues D8, K30, 59–68 (DLKLYDIPYT), T118, R178, Q187, G207, and R208. The Proton donor role is filled by K61.

It belongs to the OMP decarboxylase family. Type 1 subfamily. In terms of assembly, homodimer.

It catalyses the reaction orotidine 5'-phosphate + H(+) = UMP + CO2. It functions in the pathway pyrimidine metabolism; UMP biosynthesis via de novo pathway; UMP from orotate: step 2/2. Functionally, catalyzes the decarboxylation of orotidine 5'-monophosphate (OMP) to uridine 5'-monophosphate (UMP). This Helicobacter pylori (strain P12) protein is Orotidine 5'-phosphate decarboxylase.